Reading from the N-terminus, the 987-residue chain is ATP-dependent 6-phosphofructokinase subunit alpha (987 aa).

Residues 1–602 are N-terminal catalytic PFK domain 1; sequence MPSSSDAINR…DYRYFRDISI (602 aa). ATP contacts are provided by residues glycine 237, 300 to 301, and 330 to 333; these read RC and GDGS. Aspartate 331 contacts Mg(2+). Beta-D-fructose 6-phosphate is bound by residues 376–378, arginine 413, 420–422, glutamate 477, arginine 504, and 510–513; these read SID, MGR, and HVQR. Aspartate 378 functions as the Proton acceptor in the catalytic mechanism. The tract at residues 603–616 is interdomain linker; that stretch reads YDDGSKQLSEDKRL. The interval 617 to 987 is C-terminal regulatory PFK domain 2; sequence NIAIVHVGAA…KSLLKKQERY (371 aa). Residues arginine 686, 743–747, arginine 781, 788–790, glutamate 848, arginine 874, 880–883, and arginine 958 each bind beta-D-fructose 2,6-bisphosphate; these read TVSNN, QGG, and HVQQ.

It belongs to the phosphofructokinase type A (PFKA) family. ATP-dependent PFK group I subfamily. Eukaryotic two domain clade 'E' sub-subfamily. In terms of assembly, heterooctamer of 4 alpha and 4 beta chains. Mg(2+) serves as cofactor.

It is found in the cytoplasm. It carries out the reaction beta-D-fructose 6-phosphate + ATP = beta-D-fructose 1,6-bisphosphate + ADP + H(+). It functions in the pathway carbohydrate degradation; glycolysis; D-glyceraldehyde 3-phosphate and glycerone phosphate from D-glucose: step 3/4. With respect to regulation, allosterically activated by ADP, AMP, or fructose 2,6-bisphosphate, and allosterically inhibited by ATP or citrate. Catalyzes the phosphorylation of D-fructose 6-phosphate to fructose 1,6-bisphosphate by ATP, the first committing step of glycolysis. The chain is ATP-dependent 6-phosphofructokinase subunit alpha (PFK1) from Candida albicans (Yeast).